Here is a 97-residue protein sequence, read N- to C-terminus: Acylphosphatase (97 aa).

The region spanning 9-97 (RKHIVVTGLV…ETARAFGVRQ (89 aa)) is the Acylphosphatase-like domain. Catalysis depends on residues arginine 24 and asparagine 42.

It belongs to the acylphosphatase family.

It catalyses the reaction an acyl phosphate + H2O = a carboxylate + phosphate + H(+). This Bifidobacterium longum (strain NCC 2705) protein is Acylphosphatase (acyP).